Consider the following 96-residue polypeptide: Toxin ParE1 (96 aa).

It belongs to the RelE toxin family. As to quaternary structure, forms a ParD1(2)-ParE1(2) heterotetramer.

Its function is as follows. Toxic component of a type II toxin-antitoxin (TA) system. Its toxic effect is neutralized by coexpression with cognate antitoxin ParD1 but no other ParD or RelB antitoxin. Low levels of wild-type toxin in the absence of antitoxin decreases the rate of cell growth, and results in death or loss of colony formation abilities and greatly elongated cells. Low levels of a mutant missing the last 4 residues leads to loss of cell division while cell elongation continues. The sequence is that of Toxin ParE1 (parE1) from Caulobacter vibrioides (strain ATCC 19089 / CIP 103742 / CB 15) (Caulobacter crescentus).